Here is a 1210-residue protein sequence, read N- to C-terminus: Epidermal growth factor receptor (1210 aa).

The first 24 residues, 1–24 (MRPSGTARTTLLVLLTALCAAGGA), serve as a signal peptide directing secretion. The Extracellular portion of the chain corresponds to 25-647 (LEEKKVCQGT…VWPSGPKIPS (623 aa)). Cys-31 and Cys-58 are disulfide-bonded. Residues 75 to 300 (DLSFLKTIQE…CVKKCPRNYV (226 aa)) form an Approximate repeat. Asn-128, Asn-175, and Asn-196 each carry an N-linked (GlcNAc...) asparagine glycan. 13 cysteine pairs are disulfide-bonded: Cys-157/Cys-187, Cys-190/Cys-199, Cys-194/Cys-207, Cys-215/Cys-223, Cys-219/Cys-231, Cys-232/Cys-240, Cys-236/Cys-248, Cys-251/Cys-260, Cys-264/Cys-291, Cys-295/Cys-307, Cys-311/Cys-326, Cys-329/Cys-333, and Cys-337/Cys-362. Residue Ser-229 is modified to Phosphoserine. Asn-352, Asn-413, and Asn-444 each carry an N-linked (GlcNAc...) asparagine glycan. Residues 390 to 600 (RELEILKTVK…CVKTCPAGIM (211 aa)) form an Approximate repeat. Cystine bridges form between Cys-470/Cys-499, Cys-506/Cys-515, Cys-510/Cys-523, Cys-526/Cys-535, Cys-539/Cys-555, Cys-558/Cys-571, Cys-562/Cys-579, Cys-582/Cys-591, Cys-595/Cys-617, Cys-620/Cys-628, and Cys-624/Cys-636. The N-linked (GlcNAc...) asparagine glycan is linked to Asn-528. Asn-568 carries an N-linked (GlcNAc...) asparagine glycan. Asn-603 and Asn-623 each carry an N-linked (GlcNAc...) asparagine glycan. A helical transmembrane segment spans residues 648-670 (IATGIVGGLLFIVVVALGIGLFM). Topologically, residues 671-1210 (RRRHIVRKRT…APPSSEFIGA (540 aa)) are cytoplasmic. Thr-680 bears the Phosphothreonine; by PKC and PKD/PRKD1 mark. An important for dimerization, phosphorylation and activation region spans residues 690 to 706 (LVEPLTPSGEAPNQAHL). Position 695 is a phosphothreonine; by PKD/PRKD1 (Thr-695). Ser-697 bears the Phosphoserine mark. Positions 714-981 (FKKIKVLGSG…KMARDPQRYL (268 aa)) constitute a Protein kinase domain. Residue Lys-718 forms a Glycyl lysine isopeptide (Lys-Gly) (interchain with G-Cter in ubiquitin) linkage. 720-728 (LGSGAFGTV) provides a ligand contact to ATP. Lys-739 participates in a covalent cross-link: Glycyl lysine isopeptide (Lys-Gly) (interchain with G-Cter in ubiquitin). Lys-747 is an ATP binding site. The residue at position 747 (Lys-747) is an N6-(2-hydroxyisobutyryl)lysine. Residues Lys-756 and Lys-759 each participate in a glycyl lysine isopeptide (Lys-Gly) (interchain with G-Cter in ubiquitin) cross-link. An ATP-binding site is contributed by 792-793 (TQ). Asp-839 acts as the Proton acceptor in catalysis. Asp-857 provides a ligand contact to ATP. Lys-869 is covalently cross-linked (Glycyl lysine isopeptide (Lys-Gly) (interchain with G-Cter in ubiquitin)). Phosphotyrosine is present on Tyr-871. Residues Lys-931, Lys-962, and Lys-972 each participate in a glycyl lysine isopeptide (Lys-Gly) (interchain with G-Cter in ubiquitin) cross-link. 2 positions are modified to phosphoserine: Ser-993 and Ser-997. Tyr-1000 and Tyr-1018 each carry phosphotyrosine; by autocatalysis. 2 positions are modified to phosphoserine: Ser-1028 and Ser-1041. Thr-1043 is modified (phosphothreonine). At Ser-1044 the chain carries Phosphoserine. The S-palmitoyl cysteine moiety is linked to residue Cys-1051. Tyr-1069 carries the post-translational modification Phosphotyrosine. Phosphoserine occurs at positions 1070 and 1071. 2 positions are modified to phosphotyrosine; by autocatalysis: Tyr-1092 and Tyr-1110. The segment at 1113-1137 (QPLHPAPGRDLHYQNPHSNAVGNPE) is disordered. Positions 1127–1137 (NPHSNAVGNPE) are enriched in polar residues. A lipid anchor (S-palmitoyl cysteine) is attached at Cys-1146. Ser-1166 bears the Phosphoserine mark. At Tyr-1172 the chain carries Phosphotyrosine; by autocatalysis. Tyr-1197 is subject to Phosphotyrosine. Arg-1199 is subject to Omega-N-methylarginine.

Belongs to the protein kinase superfamily. Tyr protein kinase family. EGF receptor subfamily. Binding of the ligand triggers homo- and/or heterodimerization of the receptor triggering its autophosphorylation. Heterodimer with ERBB2. Forms a complex with CCDC88A/GIV (via SH2-like region) and GNAI3 which leads to enhanced EGFR signaling and triggering of cell migration; binding of CCDC88A requires autophosphorylation of the EGFR C-terminal region, and ligand stimulation is required for recruitment of GNAI3 to the complex. Interacts with ERRFI1; inhibits dimerization of the kinase domain and autophosphorylation. Part of a complex with ERBB2 and either PIK3C2A or PIK3C2B. Interacts with GRB2; an adapter protein coupling the receptor to downstream signaling pathways. Interacts with GAB2; involved in signaling downstream of EGFR. Interacts with STAT3; mediates EGFR downstream signaling in cell proliferation. Interacts with RIPK1; involved in NF-kappa-B activation. Interacts (autophosphorylated) with CBL, CBLB and CBLC; involved in EGFR ubiquitination and regulation; interaction with CBL is reduced in the presence of tensin TNS4. Interacts with SOCS5; regulates EGFR degradation through ELOC- and ELOB-mediated ubiquitination and proteasomal degradation. Interacts with PRMT5; methylates EGFR and enhances interaction with PTPN6. Interacts (phosphorylated) with PTPN6; inhibits EGFR-dependent activation of MAPK/ERK. Interacts with COPG1; essential for regulation of EGF-dependent nuclear transport of EGFR by retrograde trafficking from the Golgi to the ER. Interacts with TNK2; this interaction is dependent on EGF stimulation and kinase activity of EGFR. Interacts with PCNA; positively regulates PCNA. Interacts with PELP1. Interacts with MUC1. Interacts with AP2M1. Interacts with FER. Interacts (via SH2 domains) with GRB2, NCK1 and NCK2. Interacts with EPS8; mediates EPS8 phosphorylation. Interacts with ATXN2. Interacts with GAREM1. Interacts (ubiquitinated) with ANKRD13A/B/D; the interaction is direct and may regulate EGFR internalization after EGF stimulation. Interacts with GPER1; the interaction occurs in an estrogen-dependent manner. Interacts (via C-terminal cytoplasmic kinase domain) with ZPR1 (via zinc fingers). Interacts with RNF115 and RNF126. Interacts with GPRC5A (via its transmembrane domain). Interacts with FAM83B; positively regulates EGFR inducing its autophosphorylation in absence of stimulation by EGF. Interacts with LAPTM4B; positively correlates with EGFR activation. Interacts with STX19. Interacts with CD44. Interacts with PGRMC1; the interaction requires PGRMC1 homodimerization. Interacts with PIKFYVE. Interacts with NEU3. Interacts with TRAF4. Interacts with the ant venom OMEGA-myrmeciitoxin(02)-Mg1a. Interacts with CD82; this interaction facilitates ligand-induced endocytosis of the receptor and its subsequent desensitization. Post-translationally, monoubiquitinated and polyubiquitinated upon EGF stimulation; which does not affect tyrosine kinase activity or signaling capacity but may play a role in lysosomal targeting. Polyubiquitin linkage is mainly through 'Lys-63', but linkage through 'Lys-48', 'Lys-11' and 'Lys-29' also occurs. Deubiquitinated by OTUD7B, preventing degradation. Ubiquitinated by RNF115 and RNF126. Ubiquitinated by ZNRF1 or CBL at different lysines in response to EGF stimulation; leading to recruitment of the ESCRT machinery and subsequent degradation in the lysosomes. Deubiquitinated by UCHL1 leading to the inhibition of its degradation. Phosphorylated on Tyr residues in response to EGF. Phosphorylation at Ser-697 is partial and occurs only if Thr-695 is phosphorylated. Phosphorylation at Thr-680 and Thr-695 by PRKD1 inhibits EGF-induced MAPK8/JNK1 activation. Dephosphorylation by PTPRJ prevents endocytosis and stabilizes the receptor at the plasma membrane. Autophosphorylation at Tyr-1199 is stimulated by methylation at Arg-1199 and enhances interaction with PTPN6. Autophosphorylation at Tyr-1092 and/or Tyr-1110 recruits STAT3. Dephosphorylated by PTPN1 and PTPN2. In terms of processing, palmitoylated on Cys residues by ZDHHC20. Palmitoylation inhibits internalization after ligand binding, and increases the persistence of tyrosine-phosphorylated EGFR at the cell membrane. Palmitoylation increases the amplitude and duration of EGFR signaling. Post-translationally, methylated. Methylation at Arg-1199 by PRMT5 stimulates phosphorylation at Tyr-1197.

The protein localises to the cell membrane. Its subcellular location is the endoplasmic reticulum membrane. It localises to the golgi apparatus membrane. The protein resides in the nucleus membrane. It is found in the endosome. The protein localises to the endosome membrane. Its subcellular location is the nucleus. It catalyses the reaction L-tyrosyl-[protein] + ATP = O-phospho-L-tyrosyl-[protein] + ADP + H(+). With respect to regulation, endocytosis and inhibition of the activated EGFR by phosphatases like PTPRJ and PTPRK constitute immediate regulatory mechanisms. Upon EGF-binding phosphorylates EPS15 that regulates EGFR endocytosis and activity. Moreover, inducible feedback inhibitors including LRIG1, SOCS4, SOCS5 and ERRFI1 constitute alternative regulatory mechanisms for the EGFR signaling. In terms of biological role, receptor tyrosine kinase binding ligands of the EGF family and activating several signaling cascades to convert extracellular cues into appropriate cellular responses. Known ligands include EGF, TGFA/TGF-alpha, AREG, epigen/EPGN, BTC/betacellulin, epiregulin/EREG and HBEGF/heparin-binding EGF. Ligand binding triggers receptor homo- and/or heterodimerization and autophosphorylation on key cytoplasmic residues. The phosphorylated receptor recruits adapter proteins like GRB2 which in turn activates complex downstream signaling cascades. Activates at least 4 major downstream signaling cascades including the RAS-RAF-MEK-ERK, PI3 kinase-AKT, PLCgamma-PKC and STATs modules. May also activate the NF-kappa-B signaling cascade. Also directly phosphorylates other proteins like RGS16, activating its GTPase activity and probably coupling the EGF receptor signaling to the G protein-coupled receptor signaling. Also phosphorylates MUC1 and increases its interaction with SRC and CTNNB1/beta-catenin. Positively regulates cell migration via interaction with CCDC88A/GIV which retains EGFR at the cell membrane following ligand stimulation, promoting EGFR signaling which triggers cell migration. Plays a role in enhancing learning and memory performance. Plays a role in mammalian pain signaling (long-lasting hypersensitivity). The polypeptide is Epidermal growth factor receptor (Mus musculus (Mouse)).